A 130-amino-acid polypeptide reads, in one-letter code: Protein ApaG (130 aa).

The region spanning 3 to 127 is the ApaG domain; that stretch reads RATTRKIQVT…FSLDVPHMAR (125 aa).

This is Protein ApaG from Azorhizobium caulinodans (strain ATCC 43989 / DSM 5975 / JCM 20966 / LMG 6465 / NBRC 14845 / NCIMB 13405 / ORS 571).